We begin with the raw amino-acid sequence, 2036 residues long: Bikaverin polyketide synthase bik1 (2036 aa).

The tract at residues 8 to 242 (YVFGDQSTPV…YPAPIYGPYH (235 aa)) is N-terminal acylcarrier protein transacylase domain (SAT). One can recognise a Ketosynthase family 3 (KS3) domain in the interval 370–801 (ENKIAIIGFS…GGNTSLLLED (432 aa)). Catalysis depends on for beta-ketoacyl synthase activity residues Cys541, His676, and His718. The acyl/malonyl transferases stretch occupies residues 908-1209 (FLFTGQGAQE…LASLRRKEDH (302 aa)). The active-site For acyl/malonyl transferase activity is the Ser997. The interval 1293-1425 (HNVIEQVHGD…CDVAVENPSS (133 aa)) is N-terminal hotdog fold. The 308-residue stretch at 1293–1600 (HNVIEQVHGD…FKKVARKVLE (308 aa)) folds into the PKS/mFAS DH domain. Residues 1295-1599 (VIEQVHGDKR…TFKKVARKVL (305 aa)) form a product template (PT) domain region. His1325 serves as the catalytic Proton acceptor; for dehydratase activity. Positions 1452–1600 (SAHMMRRGLL…FKKVARKVLE (149 aa)) are C-terminal hotdog fold. Asp1511 (proton donor; for dehydratase activity) is an active-site residue. Residues 1628–1654 (VLTPPSTTSHSVGTTSPPEPTESPVGS) form a disordered region. Low complexity predominate over residues 1638-1654 (SVGTTSPPEPTESPVGS). Residues 1653 to 1730 (GSASGLIQKA…DLKSFLGAND (78 aa)) form the Carrier domain. Position 1690 is an O-(pantetheine 4'-phosphoryl)serine (Ser1690). Positions 1733–1758 (FSSSNSEAESSASSAASTSPSDHGDD) are disordered. Positions 1734 to 1753 (SSSNSEAESSASSAASTSPS) are enriched in low complexity. Ser1857 functions as the For thioesterase activity in the catalytic mechanism.

It functions in the pathway secondary metabolite biosynthesis. Its function is as follows. Polyketide synthase; part of the gene cluster that mediates the biosynthesis of bikaverin, a red pigment also considered as a mycotoxin. The first stage is catalyzed by the polyketide synthase bik1, which catalyzes the formation of the intermediate SMA76a also knowm as pre-bikaverin. FAD-dependent monooxygenase bik2 might then be responsible for the oxidation of pre-bikaverin to oxo-pre-bikaverin which is in turn methylated by the O-methyltransferase bik3 to me-oxo-pre-bikaverin. A further cycle of oxydation and methylation by bik2 and bik3 leads to the final product of bikaverin, via a nor-bikaverin intermediate. In Gibberella fujikuroi (strain CBS 195.34 / IMI 58289 / NRRL A-6831) (Bakanae and foot rot disease fungus), this protein is Bikaverin polyketide synthase bik1.